Here is a 150-residue protein sequence, read N- to C-terminus: SsrA-binding protein (150 aa).

Belongs to the SmpB family.

The protein localises to the cytoplasm. Its function is as follows. Required for rescue of stalled ribosomes mediated by trans-translation. Binds to transfer-messenger RNA (tmRNA), required for stable association of tmRNA with ribosomes. tmRNA and SmpB together mimic tRNA shape, replacing the anticodon stem-loop with SmpB. tmRNA is encoded by the ssrA gene; the 2 termini fold to resemble tRNA(Ala) and it encodes a 'tag peptide', a short internal open reading frame. During trans-translation Ala-aminoacylated tmRNA acts like a tRNA, entering the A-site of stalled ribosomes, displacing the stalled mRNA. The ribosome then switches to translate the ORF on the tmRNA; the nascent peptide is terminated with the 'tag peptide' encoded by the tmRNA and targeted for degradation. The ribosome is freed to recommence translation, which seems to be the essential function of trans-translation. This chain is SsrA-binding protein, found in Borreliella afzelii (strain PKo) (Borrelia afzelii).